A 63-amino-acid chain; its full sequence is Large ribosomal subunit protein uL30 (63 aa).

It belongs to the universal ribosomal protein uL30 family. Part of the 50S ribosomal subunit.

The chain is Large ribosomal subunit protein uL30 from Xylella fastidiosa (strain 9a5c).